A 906-amino-acid chain; its full sequence is Protein translocase subunit SecA (906 aa).

Residues Gln89, 107 to 111, and Asp502 contribute to the ATP site; that span reads GEGKT. Zn(2+)-binding residues include Cys890, Cys892, Cys901, and His902.

This sequence belongs to the SecA family. In terms of assembly, monomer and homodimer. Part of the essential Sec protein translocation apparatus which comprises SecA, SecYEG and auxiliary proteins SecDF-YajC and YidC. Zn(2+) serves as cofactor.

Its subcellular location is the cell inner membrane. It is found in the cytoplasm. It carries out the reaction ATP + H2O + cellular proteinSide 1 = ADP + phosphate + cellular proteinSide 2.. Functionally, part of the Sec protein translocase complex. Interacts with the SecYEG preprotein conducting channel. Has a central role in coupling the hydrolysis of ATP to the transfer of proteins into and across the cell membrane, serving both as a receptor for the preprotein-SecB complex and as an ATP-driven molecular motor driving the stepwise translocation of polypeptide chains across the membrane. This chain is Protein translocase subunit SecA, found in Brucella canis (strain ATCC 23365 / NCTC 10854 / RM-666).